The primary structure comprises 154 residues: Transcription antitermination protein NusB (154 aa).

The protein belongs to the NusB family.

Involved in transcription antitermination. Required for transcription of ribosomal RNA (rRNA) genes. Binds specifically to the boxA antiterminator sequence of the ribosomal RNA (rrn) operons. This chain is Transcription antitermination protein NusB, found in Rickettsia typhi (strain ATCC VR-144 / Wilmington).